The sequence spans 188 residues: Crossover junction endodeoxyribonuclease RuvC (188 aa).

Catalysis depends on residues D7, E68, and D141. D7, E68, and D141 together coordinate Mg(2+).

This sequence belongs to the RuvC family. As to quaternary structure, homodimer which binds Holliday junction (HJ) DNA. The HJ becomes 2-fold symmetrical on binding to RuvC with unstacked arms; it has a different conformation from HJ DNA in complex with RuvA. In the full resolvosome a probable DNA-RuvA(4)-RuvB(12)-RuvC(2) complex forms which resolves the HJ. The cofactor is Mg(2+).

It is found in the cytoplasm. It carries out the reaction Endonucleolytic cleavage at a junction such as a reciprocal single-stranded crossover between two homologous DNA duplexes (Holliday junction).. Its function is as follows. The RuvA-RuvB-RuvC complex processes Holliday junction (HJ) DNA during genetic recombination and DNA repair. Endonuclease that resolves HJ intermediates. Cleaves cruciform DNA by making single-stranded nicks across the HJ at symmetrical positions within the homologous arms, yielding a 5'-phosphate and a 3'-hydroxyl group; requires a central core of homology in the junction. The consensus cleavage sequence is 5'-(A/T)TT(C/G)-3'. Cleavage occurs on the 3'-side of the TT dinucleotide at the point of strand exchange. HJ branch migration catalyzed by RuvA-RuvB allows RuvC to scan DNA until it finds its consensus sequence, where it cleaves and resolves the cruciform DNA. The sequence is that of Crossover junction endodeoxyribonuclease RuvC from Streptomyces coelicolor (strain ATCC BAA-471 / A3(2) / M145).